The primary structure comprises 260 residues: MSDALLHADNLHYRAGGRTLIEGVSLTLAPGEMVALIGPNGAGKSTLLRLLSGYLDPIQGQCRLQGRELAVWTAAQLARRRAVMAQQGSVAFSFRVSEVVAMARAPWSGTPATTVLAEVMTLTGCEMLASREFRRLSGGEQQRVRLAMALAQLWQQDGPEGWLFLDEPTSALDLYHQQALLRLLYQLTRAGKLAVCCILHDVNLAALWADRILLLQQGRLAASGTPAEVLTEVQLRACYQADLRVQTQQEDGVPQIYLRR.

In terms of domain architecture, ABC transporter spans 6-242; that stretch reads LHADNLHYRA…VQLRACYQAD (237 aa). 38–45 serves as a coordination point for ATP; it reads GPNGAGKS.

It belongs to the ABC transporter superfamily. Heme (hemin) importer (TC 3.A.1.14.5) family. As to quaternary structure, the complex is composed of two ATP-binding proteins (HmuV), two transmembrane proteins (HmuU) and a solute-binding protein (HmuT).

The protein resides in the cell inner membrane. In terms of biological role, part of the ABC transporter complex HmuTUV involved in hemin import. Responsible for energy coupling to the transport system. This Sodalis glossinidius (strain morsitans) protein is Hemin import ATP-binding protein HmuV.